The sequence spans 513 residues: Aspartic proteinase A2 (513 aa).

Residues 1-24 (MGVYSRAVAFSVFVSFLLFFTAYS) form the signal peptide. Positions 25 to 71 (KRNDGTFRVGLKKLKLDPNNRLATRFGSKQEEALRSSLRSYNNNLGG) are cleaved as a propeptide — activation peptide. Residues 89-510 (YYGEIAIGTP…DFGNEQVGFA (422 aa)) form the Peptidase A1 domain. D107 is an active-site residue. Disulfide bonds link C120–C126 and C285–C289. The active site involves D294. The Saposin B-type domain occupies 319 to 424 (VVSQQCKTVV…NEICERMPSP (106 aa)). Disulfide bonds link C324–C418, C349–C390, C355–C387, and C432–C469. N-linked (GlcNAc...) asparagine glycosylation occurs at N404.

This sequence belongs to the peptidase A1 family. Expressed in seed pods and dry seeds.

The protein localises to the vacuole. Its function is as follows. Involved in the breakdown of propeptides of storage proteins in protein-storage vacuoles. The polypeptide is Aspartic proteinase A2 (APA2) (Arabidopsis thaliana (Mouse-ear cress)).